The chain runs to 174 residues: Co-chaperone protein HscB homolog (174 aa).

The region spanning 2–74 (NYFELFKFSP…IRRAEHMLSL (73 aa)) is the J domain.

Belongs to the HscB family. In terms of assembly, interacts with HscA and stimulates its ATPase activity.

In terms of biological role, co-chaperone involved in the maturation of iron-sulfur cluster-containing proteins. Seems to help targeting proteins to be folded toward HscA. In Shewanella baltica (strain OS223), this protein is Co-chaperone protein HscB homolog.